The following is a 443-amino-acid chain: Major royal jelly protein 7 (443 aa).

An N-terminal signal peptide occupies residues 1 to 17 (MTRWLFMVACLGIACQG). Asn145, Asn161, Asn178, and Asn321 each carry an N-linked (GlcNAc...) asparagine glycan.

It belongs to the major royal jelly protein family. In terms of tissue distribution, found in and secreted from the hypopharyngeal glands of the worker honey bee (at protein level); expression peaks at 12 days post eclosion. Expressed in the brains of adult worker bees peaking at 12 days post eclosion (at protein level). Expressed in the spermatheca of adult queen bees (at protein level); Expression levels are higher in mated queens than in virgin queens.

The protein resides in the secreted. Functionally, component of royal jelly, a substance produced in the hypopharyngeal gland containing proteins, free amino acids, fatty acids, sugars and other nutrients, which is fed to developing larvae by worker nurse bees. All larvae are fed some royal jelly (also known as worker jelly) early in their development but it forms the principal source of nutrition for larvae destined to become queen bees. Produced in the spermatheca of adult queen bees, along with other major royal jelly proteins, where it may act as a nutrient supply for sperm stored by mated queens, or be involved in energy metabolism. The polypeptide is Major royal jelly protein 7 (Apis mellifera (Honeybee)).